Reading from the N-terminus, the 158-residue chain is Placenta growth factor (158 aa).

An N-terminal signal peptide occupies residues methionine 1–alanine 18. N-linked (GlcNAc...) asparagine glycosylation is found at asparagine 29 and asparagine 30. 3 disulfide bridges follow: cysteine 48–cysteine 90, cysteine 79–cysteine 125, and cysteine 83–cysteine 127. A glycan (N-linked (GlcNAc...) asparagine) is linked at asparagine 97. The disordered stretch occupies residues alanine 136–proline 158. Residues glutamate 137 to arginine 149 are compositionally biased toward basic residues.

The protein belongs to the PDGF/VEGF growth factor family. Antiparallel homodimer; disulfide-linked. Also found as heterodimer with VEGFA/VEGF.

The protein resides in the secreted. Its function is as follows. Growth factor active in angiogenesis and endothelial cell growth, stimulating their proliferation and migration. It binds to the receptor FLT1/VEGFR-1. Also promotes cell tumor growth. The protein is Placenta growth factor (Pgf) of Mus musculus (Mouse).